The following is a 585-amino-acid chain: Pyruvate kinase (585 aa).

A substrate-binding site is contributed by Arg-32. K(+) contacts are provided by Asn-34, Ser-36, Asp-66, and Thr-67. 34–37 (NFSH) contributes to the ATP binding site. Arg-73 and Lys-156 together coordinate ATP. Glu-222 contributes to the Mg(2+) binding site. The substrate site is built by Gly-245, Asp-246, and Thr-278. Asp-246 is a Mg(2+) binding site.

The protein belongs to the pyruvate kinase family. It in the C-terminal section; belongs to the PEP-utilizing enzyme family. As to quaternary structure, homotetramer. Mg(2+) serves as cofactor. K(+) is required as a cofactor.

The catalysed reaction is pyruvate + ATP = phosphoenolpyruvate + ADP + H(+). It functions in the pathway carbohydrate degradation; glycolysis; pyruvate from D-glyceraldehyde 3-phosphate: step 5/5. In Bacillus licheniformis, this protein is Pyruvate kinase (pyk).